The following is a 1462-amino-acid chain: Iron-sulfur cluster assembly protein SufD (1462 aa).

3 disordered regions span residues 500 to 525, 938 to 970, and 1111 to 1153; these read IDNN…DNPY, NQNK…GTEQ, and NIPS…EKEE. Low complexity predominate over residues 510-523; the sequence is NNNNNNNNNNNCDN. Residues 961–970 show a composition bias toward basic and acidic residues; the sequence is HIQDEQGTEQ. Positions 1111–1136 are enriched in low complexity; sequence NIPSNNKQTNSNNNSEYNNEQNNCSN.

It belongs to the iron-sulfur cluster assembly SufBD family. In terms of assembly, component of a complex composed of SufB, SufC and SufD in a stoichiometric ratio of 1:2:1. Interacts with SufB. Interacts with SufC; the interaction enhances the ATPase activity of SufC. Proteolytically cleaved.

It localises to the plastid. The protein localises to the apicoplast. It functions in the pathway cofactor biosynthesis; iron-sulfur cluster biosynthesis. In terms of biological role, participates in the sulfur mobilization (SUF) pathway for iron-sulfur (Fe-S) cluster biogenesis. As part of a complex consisting of SufB-SufC(2)-SufD, involved in assembly of [4Fe-4S] clusters. Enhances the ATPase activity of SufC. The chain is Iron-sulfur cluster assembly protein SufD from Plasmodium falciparum (isolate 3D7).